Consider the following 507-residue polypeptide: Transcription factor NIGTH1 (507 aa).

2 disordered regions span residues 139-172 (ASAA…TALD) and 238-268 (SREA…RKAR). The segment covering 152-161 (PKEHSEHHPL) has biased composition (basic and acidic residues). Residues 263-323 (PHRKARRCWS…HLQKYRLHTR (61 aa)) enclose the HTH myb-type domain. The segment at residues 294 to 319 (PKQIRELMKVDGLTNDEVKSHLQKYR) is a DNA-binding region (H-T-H motif). The tract at residues 402-507 (AVAPPPPLPP…TTTSAGAINY (106 aa)) is disordered. Over residues 412–433 (QQQLAPPYSAKSSASARLGSPD) the composition is skewed to low complexity. The segment covering 437-446 (RGSGGGGGAA) has biased composition (gly residues). Residues 456-476 (ESIEEEGEGEEREDDDDDDEM) are compositionally biased toward acidic residues.

Interacts with ACA5.

It is found in the nucleus. In terms of biological role, probable transcription factor that may play a role in regulatory networks controlling development and metabolism. This is Transcription factor NIGTH1 from Oryza sativa subsp. japonica (Rice).